The following is a 155-amino-acid chain: Nucleosome assembly protein 1-like 5 (155 aa).

The segment covering 1–16 (MADPEKQGPAESRAED) has biased composition (basic and acidic residues). A disordered region spans residues 1-60 (MADPEKQGPAESRAEDEVMEGAQGGEDAATGDSATAPAAEEPQAPAENAPKPKNDFIESL). Over residues 27 to 49 (DAATGDSATAPAAEEPQAPAENA) the composition is skewed to low complexity. Positions 68–94 (VLALKKLQKRCDKIEAKFDKEFQALEK) form a coiled coil. The disordered stretch occupies residues 119–155 (WTLEGEDDEDDEEEEDEEEEEEEAAAGATGGPDSAEK). Positions 122 to 142 (EGEDDEDDEEEEDEEEEEEEA) are enriched in acidic residues.

It belongs to the nucleosome assembly protein (NAP) family.

It localises to the nucleus. The protein is Nucleosome assembly protein 1-like 5 (Nap1l5) of Rattus norvegicus (Rat).